The sequence spans 159 residues: Cytochrome b6-f complex subunit 4 (159 aa).

Helical transmembrane passes span 36–56, 95–115, and 131–151; these read LLYIFPVVILGTIACNVGLAV, LLGVLLMVSVPAGLLTVPFLE, and TVFLVGTVVALWLGIGATLPI.

It belongs to the cytochrome b family. PetD subfamily. In terms of assembly, the 4 large subunits of the cytochrome b6-f complex are cytochrome b6, subunit IV (17 kDa polypeptide, petD), cytochrome f and the Rieske protein, while the 4 small subunits are petG, petL, petM and petN. The complex functions as a dimer.

It is found in the plastid. The protein localises to the chloroplast thylakoid membrane. In terms of biological role, component of the cytochrome b6-f complex, which mediates electron transfer between photosystem II (PSII) and photosystem I (PSI), cyclic electron flow around PSI, and state transitions. The polypeptide is Cytochrome b6-f complex subunit 4 (Piper cenocladum (Ant piper)).